The primary structure comprises 200 residues: LHFPL tetraspan subfamily member 7 protein (200 aa).

Transmembrane regions (helical) follow at residues 5-27, 68-88, 113-133, and 150-170; these read VWVA…PAWF, VSAV…IFLL, AATA…SPFI, and LGWG…LPII.

Belongs to the TMEM211 family.

It is found in the membrane. In Homo sapiens (Human), this protein is LHFPL tetraspan subfamily member 7 protein.